The chain runs to 355 residues: Vacuolar protein sorting-associated protein 37C (355 aa).

A Phosphoserine modification is found at Ser29. A VPS37 C-terminal domain is found at 78–167 (VERCQEQKAK…RKPRASQELA (90 aa)). The tract at residues 159-355 (KPRASQELAG…PPPGPAWPGY (197 aa)) is disordered. 2 stretches are compositionally biased toward pro residues: residues 170 to 186 (APPP…PQGT) and 194 to 214 (PQPP…PSLP). Residues 291–304 (APSPGYPQQSPYPA) are compositionally biased toward low complexity. The segment covering 321–355 (PGQPQPSVPLQPPYPPGPAPPYGFPPPPGPAWPGY) has biased composition (pro residues).

It belongs to the VPS37 family. In terms of assembly, component of the ESCRT-I complex (endosomal sorting complex required for transport I) which consists of TSG101, VPS28, a VPS37 protein (VPS37A to -D) and MVB12A or MVB12B in a 1:1:1:1 stoichiometry. Interacts with TSG101, VPS28, MVB12A and MVB12B. Component of the ESCRT-I complex (endosomal sorting complex required for transport I) which consists of TSG101, VPS28, a VPS37 protein (VPS37A to -D) and UBAP1 in a 1:1:1:1 stoichiometry. Interacts with HGS and STAM2. Interacts with CEP55. In terms of processing, phosphorylated by TBK1.

The protein resides in the late endosome membrane. Its function is as follows. Component of the ESCRT-I complex, a regulator of vesicular trafficking process. Required for the sorting of endocytic ubiquitinated cargos into multivesicular bodies. May be involved in cell growth and differentiation. In Homo sapiens (Human), this protein is Vacuolar protein sorting-associated protein 37C (VPS37C).